Reading from the N-terminus, the 696-residue chain is Equisetin cluster transcription factor eqxF (696 aa).

Disordered regions lie at residues 1–24 and 73–117; these read MADQ…GRAR and NQEQ…PADY.

The protein resides in the nucleus. Functionally, transcription factor that regulates the expression of the gene cluster that mediates the biosynthesis of Equisetin. The polypeptide is Equisetin cluster transcription factor eqxF (Fusarium heterosporum).